Reading from the N-terminus, the 359-residue chain is Peptide chain release factor 1 (359 aa).

Gln-236 is modified (N5-methylglutamine).

Belongs to the prokaryotic/mitochondrial release factor family. In terms of processing, methylated by PrmC. Methylation increases the termination efficiency of RF1.

It is found in the cytoplasm. Functionally, peptide chain release factor 1 directs the termination of translation in response to the peptide chain termination codons UAG and UAA. The polypeptide is Peptide chain release factor 1 (Streptococcus pyogenes serotype M6 (strain ATCC BAA-946 / MGAS10394)).